The following is a 277-amino-acid chain: Ribosomal RNA small subunit methyltransferase I (277 aa).

This sequence belongs to the methyltransferase superfamily. RsmI family.

Its subcellular location is the cytoplasm. It catalyses the reaction cytidine(1402) in 16S rRNA + S-adenosyl-L-methionine = 2'-O-methylcytidine(1402) in 16S rRNA + S-adenosyl-L-homocysteine + H(+). In terms of biological role, catalyzes the 2'-O-methylation of the ribose of cytidine 1402 (C1402) in 16S rRNA. In Mycoplasma genitalium (strain ATCC 33530 / DSM 19775 / NCTC 10195 / G37) (Mycoplasmoides genitalium), this protein is Ribosomal RNA small subunit methyltransferase I.